Here is a 401-residue protein sequence, read N- to C-terminus: Putative F-box/FBD/LRR-repeat protein At3g23955 (401 aa).

An F-box domain is found at 56–102 (VPARFQLPDPLLTQILNHLPTEEAVKTSVLSTRWRTLWLWVHNLELS). LRR repeat units lie at residues 128–152 (IESL…AFVK) and 275–296 (MSSL…FLRS). The region spanning 321-373 (IKRVSISSVPECLLSSLEFVEFKAPICGLAPEMMLVWYFLENSPTLKKLTLRL) is the FBD domain.

The polypeptide is Putative F-box/FBD/LRR-repeat protein At3g23955 (Arabidopsis thaliana (Mouse-ear cress)).